The chain runs to 651 residues: Acetyl-coenzyme A synthetase (651 aa).

CoA contacts are provided by residues 191 to 194 (RGGK), Thr-311, and Asn-335. ATP contacts are provided by residues 387-389 (GEP), 411-416 (DTWWQT), Asp-500, and Arg-515. CoA is bound at residue Ser-523. Residue Arg-526 participates in ATP binding. Val-537, His-539, and Val-542 together coordinate Mg(2+). Residue Arg-584 coordinates CoA. An N6-acetyllysine modification is found at Lys-609.

It belongs to the ATP-dependent AMP-binding enzyme family. Mg(2+) is required as a cofactor. Acetylated. Deacetylation by the SIR2-homolog deacetylase activates the enzyme.

It catalyses the reaction acetate + ATP + CoA = acetyl-CoA + AMP + diphosphate. Functionally, catalyzes the conversion of acetate into acetyl-CoA (AcCoA), an essential intermediate at the junction of anabolic and catabolic pathways. AcsA undergoes a two-step reaction. In the first half reaction, AcsA combines acetate with ATP to form acetyl-adenylate (AcAMP) intermediate. In the second half reaction, it can then transfer the acetyl group from AcAMP to the sulfhydryl group of CoA, forming the product AcCoA. The sequence is that of Acetyl-coenzyme A synthetase from Stutzerimonas stutzeri (strain A1501) (Pseudomonas stutzeri).